Reading from the N-terminus, the 384-residue chain is Succinyl-diaminopimelate desuccinylase (384 aa).

Residue histidine 71 participates in Zn(2+) binding. Aspartate 73 is a catalytic residue. Zn(2+) is bound at residue aspartate 104. Residue glutamate 138 is the Proton acceptor of the active site. Glutamate 139, glutamate 167, and histidine 357 together coordinate Zn(2+).

It belongs to the peptidase M20A family. DapE subfamily. Homodimer. Zn(2+) is required as a cofactor. The cofactor is Co(2+).

The catalysed reaction is N-succinyl-(2S,6S)-2,6-diaminopimelate + H2O = (2S,6S)-2,6-diaminopimelate + succinate. It participates in amino-acid biosynthesis; L-lysine biosynthesis via DAP pathway; LL-2,6-diaminopimelate from (S)-tetrahydrodipicolinate (succinylase route): step 3/3. Functionally, catalyzes the hydrolysis of N-succinyl-L,L-diaminopimelic acid (SDAP), forming succinate and LL-2,6-diaminopimelate (DAP), an intermediate involved in the bacterial biosynthesis of lysine and meso-diaminopimelic acid, an essential component of bacterial cell walls. The sequence is that of Succinyl-diaminopimelate desuccinylase from Blochmanniella floridana.